A 632-amino-acid chain; its full sequence is 2-hydroxyacyl-CoA lyase 2 (632 aa).

The helical transmembrane segment at 13-33 (FFPSFLLLAFGTLVAAVLGVA) threads the bilayer. Residue E98 coordinates thiamine diphosphate. S369 carries the phosphoserine modification. Positions 470-550 (DFVATAAYLV…VIALVGNDAG (81 aa)) are thiamine pyrophosphate binding. Residues D521 and N547 each contribute to the Mg(2+) site.

It belongs to the TPP enzyme family. Mg(2+) is required as a cofactor. The cofactor is thiamine diphosphate.

Its subcellular location is the endoplasmic reticulum membrane. It carries out the reaction 2-hydroxyoctadecanoyl-CoA = heptadecanal + formyl-CoA. It catalyses the reaction (2R)-hydroxyhexadecanoyl-CoA = pentadecanal + formyl-CoA. Endoplasmic reticulum 2-OH acyl-CoA lyase involved in the cleavage (C1 removal) reaction in the fatty acid alpha-oxydation in a thiamine pyrophosphate (TPP)-dependent manner. Involved in the phytosphingosine degradation pathway. The sequence is that of 2-hydroxyacyl-CoA lyase 2 (Ilvbl) from Mus musculus (Mouse).